A 146-amino-acid polypeptide reads, in one-letter code: MQVILLEPGKLGKTGDVVNVKDGYARNWLIPQGIASPATNSNMKSLEARVRSRQKIQAQEKAAAEDLASRLNGVAVELSVRAGEGKIYGAVTHQDVANSLDKLGFDVDKRRIEMPKTVKEIGEYDISYRAHPEVTIPMKLVVHAQK.

This sequence belongs to the bacterial ribosomal protein bL9 family.

In terms of biological role, binds to the 23S rRNA. In Deinococcus deserti (strain DSM 17065 / CIP 109153 / LMG 22923 / VCD115), this protein is Large ribosomal subunit protein bL9.